Consider the following 472-residue polypeptide: Methanethiol oxidase (472 aa).

It belongs to the selenium-binding protein family.

It localises to the nucleus. The protein resides in the cytoplasm. Its subcellular location is the cytosol. The protein localises to the membrane. It carries out the reaction methanethiol + O2 + H2O = hydrogen sulfide + formaldehyde + H2O2 + H(+). It functions in the pathway organosulfur degradation. In terms of biological role, catalyzes the oxidation of methanethiol, an organosulfur compound known to be produced in substantial amounts by gut bacteria. Selenium-binding protein which may be involved in the sensing of reactive xenobiotics in the cytoplasm. May be involved in intra-Golgi protein transport. The chain is Methanethiol oxidase (selenbp1-a) from Xenopus laevis (African clawed frog).